The following is a 926-amino-acid chain: Probable zinc protease PqqL (926 aa).

His-79 serves as a coordination point for Zn(2+). Glu-82 functions as the Proton acceptor in the catalytic mechanism. 2 residues coordinate Zn(2+): His-83 and Glu-159.

Belongs to the peptidase M16 family. Requires Zn(2+) as cofactor.

This is Probable zinc protease PqqL (pqqL) from Haemophilus influenzae (strain ATCC 51907 / DSM 11121 / KW20 / Rd).